The sequence spans 127 residues: Glycine cleavage system H protein (127 aa).

A Lipoyl-binding domain is found at 22–104 (KVRIGITDFA…YEKAWMIVVE (83 aa)). Residue K63 is modified to N6-lipoyllysine.

This sequence belongs to the GcvH family. As to quaternary structure, the glycine cleavage system is composed of four proteins: P, T, L and H. The cofactor is (R)-lipoate.

In terms of biological role, the glycine cleavage system catalyzes the degradation of glycine. The H protein shuttles the methylamine group of glycine from the P protein to the T protein. Functionally, is also involved in protein lipoylation via its role as an octanoyl/lipoyl carrier protein intermediate. The polypeptide is Glycine cleavage system H protein (Geobacillus sp. (strain WCH70)).